Consider the following 324-residue polypeptide: MIEIQKPTIRCEELSQDQKYGRYVIEPLERGYGITIGNALRRTLLSSLPGAAVTAVKIDGVLHEFSTIPGVLEDVPEIILNLKGLAIKMSSPGPKVMYIEAQGECEVKAKDIKADADIEICNPEHHIATLNEDARLFMEITVNQGKGYVPAERNKQSNQPIGVIPVDSIYTPVTKVNYKVENTRVGQVTDYDKLTMEIWTNGTIRPDEALTVAAKILIEHFNLFTDLSNIPTKIETVVKQEPPKRNKLLDMTIEELELSVRSYNCLKRAGINTVEDLVNKTEEEMMKVRNLGKKSLEEVIQKLHSLGLSLKKSDSTPKGEEEEK.

Residues 1 to 228 form an alpha N-terminal domain (alpha-NTD) region; the sequence is MIEIQKPTIR…EHFNLFTDLS (228 aa). Residues 245–324 form an alpha C-terminal domain (alpha-CTD) region; the sequence is RNKLLDMTIE…STPKGEEEEK (80 aa).

This sequence belongs to the RNA polymerase alpha chain family. In terms of assembly, homodimer. The RNAP catalytic core consists of 2 alpha, 1 beta, 1 beta' and 1 omega subunit. When a sigma factor is associated with the core the holoenzyme is formed, which can initiate transcription.

The catalysed reaction is RNA(n) + a ribonucleoside 5'-triphosphate = RNA(n+1) + diphosphate. Functionally, DNA-dependent RNA polymerase catalyzes the transcription of DNA into RNA using the four ribonucleoside triphosphates as substrates. The sequence is that of DNA-directed RNA polymerase subunit alpha from Caldicellulosiruptor saccharolyticus (strain ATCC 43494 / DSM 8903 / Tp8T 6331).